The sequence spans 335 residues: Nucleoid-associated protein YejK (335 aa).

It belongs to the YejK family.

It is found in the cytoplasm. The protein localises to the nucleoid. This chain is Nucleoid-associated protein YejK, found in Salmonella arizonae (strain ATCC BAA-731 / CDC346-86 / RSK2980).